A 192-amino-acid polypeptide reads, in one-letter code: Molybdenum cofactor guanylyltransferase (192 aa).

GTP contacts are provided by residues 10 to 12, Lys23, Asn51, Asp69, and Asp99; that span reads LAG. A Mg(2+)-binding site is contributed by Asp99.

The protein belongs to the MobA family. Monomer. The cofactor is Mg(2+).

The protein localises to the cytoplasm. The catalysed reaction is Mo-molybdopterin + GTP + H(+) = Mo-molybdopterin guanine dinucleotide + diphosphate. In terms of biological role, transfers a GMP moiety from GTP to Mo-molybdopterin (Mo-MPT) cofactor (Moco or molybdenum cofactor) to form Mo-molybdopterin guanine dinucleotide (Mo-MGD) cofactor. The protein is Molybdenum cofactor guanylyltransferase of Haemophilus influenzae (strain 86-028NP).